The following is a 480-amino-acid chain: Glutamate--tRNA ligase (480 aa).

A 'HIGH' region motif is present at residues 8–18; it reads PSPTGPLHIGG. A 'KMSKS' region motif is present at residues 249–253; that stretch reads KMSKR. Lysine 252 contacts ATP.

The protein belongs to the class-I aminoacyl-tRNA synthetase family. Glutamate--tRNA ligase type 1 subfamily. As to quaternary structure, monomer.

Its subcellular location is the cytoplasm. The catalysed reaction is tRNA(Glu) + L-glutamate + ATP = L-glutamyl-tRNA(Glu) + AMP + diphosphate. Its function is as follows. Catalyzes the attachment of glutamate to tRNA(Glu) in a two-step reaction: glutamate is first activated by ATP to form Glu-AMP and then transferred to the acceptor end of tRNA(Glu). This chain is Glutamate--tRNA ligase, found in Carboxydothermus hydrogenoformans (strain ATCC BAA-161 / DSM 6008 / Z-2901).